The sequence spans 122 residues: Large ribosomal subunit protein uL14 (122 aa).

This sequence belongs to the universal ribosomal protein uL14 family. In terms of assembly, part of the 50S ribosomal subunit. Forms a cluster with proteins L3 and L19. In the 70S ribosome, L14 and L19 interact and together make contacts with the 16S rRNA in bridges B5 and B8.

Binds to 23S rRNA. Forms part of two intersubunit bridges in the 70S ribosome. The chain is Large ribosomal subunit protein uL14 from Ruegeria pomeroyi (strain ATCC 700808 / DSM 15171 / DSS-3) (Silicibacter pomeroyi).